The chain runs to 458 residues: ATP synthase subunit beta (458 aa).

148–155 lines the ATP pocket; it reads GGAGVGKT.

The protein belongs to the ATPase alpha/beta chains family. As to quaternary structure, F-type ATPases have 2 components, CF(1) - the catalytic core - and CF(0) - the membrane proton channel. CF(1) has five subunits: alpha(3), beta(3), gamma(1), delta(1), epsilon(1). CF(0) has three main subunits: a(1), b(2) and c(9-12). The alpha and beta chains form an alternating ring which encloses part of the gamma chain. CF(1) is attached to CF(0) by a central stalk formed by the gamma and epsilon chains, while a peripheral stalk is formed by the delta and b chains.

Its subcellular location is the cell inner membrane. It catalyses the reaction ATP + H2O + 4 H(+)(in) = ADP + phosphate + 5 H(+)(out). In terms of biological role, produces ATP from ADP in the presence of a proton gradient across the membrane. The catalytic sites are hosted primarily by the beta subunits. This is ATP synthase subunit beta from Actinobacillus succinogenes (strain ATCC 55618 / DSM 22257 / CCUG 43843 / 130Z).